Consider the following 484-residue polypeptide: Probable peptide/nitrate transporter At3g43790 (484 aa).

The next 12 membrane-spanning stretches (helical) occupy residues 39–59, 76–96, 107–127, 129–149, 168–188, 210–230, 278–298, 318–338, 355–375, 381–401, 416–436, and 460–480; these read FIWLVSLCTALPISSLFPYIY, FYAGFVGSSFMIGRALTSIFW, PIILIGTFSVIIFNTLFGLST, FWLAISVRFLLGCFNCLLGVI, VVSTSRGIGLILGPAIGGYLA, FLPSLVISVYATAVLIACWWL, MAIIIVYCVFSLQEIAYNEIF, VGEVLAISGLGLLVFQLLVYP, VLLIPLLSCYPYIALLSGVTL, CASIIKNALSISLVTGLFIML, ISMTAMSVFKSFGPAGGGVLF, and VFLVLNLVQLVGLILTFIPYI.

It belongs to the major facilitator superfamily.

The protein resides in the membrane. In Arabidopsis thaliana (Mouse-ear cress), this protein is Probable peptide/nitrate transporter At3g43790 (ZIFL2).